We begin with the raw amino-acid sequence, 462 residues long: GTPase Der (462 aa).

EngA-type G domains are found at residues 3–166 (PVIA…ITEM) and 175–348 (IKIA…HSAI). GTP is bound by residues 9-16 (GRPNVGKS), 56-60 (DTGGI), 118-121 (NKTD), 181-188 (GRPNVGKS), 228-232 (DTAGV), and 293-296 (NKWD). The 85-residue stretch at 349–433 (QSFSTPKLTR…PLKIEFKGGQ (85 aa)) folds into the KH-like domain.

The protein belongs to the TRAFAC class TrmE-Era-EngA-EngB-Septin-like GTPase superfamily. EngA (Der) GTPase family. As to quaternary structure, associates with the 50S ribosomal subunit.

GTPase that plays an essential role in the late steps of ribosome biogenesis. This is GTPase Der from Legionella pneumophila (strain Lens).